Consider the following 341-residue polypeptide: Methionine import ATP-binding protein MetN (341 aa).

An ABC transporter domain is found at 6–247 (IEIKKLSKNF…PQHQATRHLL (242 aa)). 44-51 (GMSGAGKS) contributes to the ATP binding site.

Belongs to the ABC transporter superfamily. Methionine importer (TC 3.A.1.24) family. As to quaternary structure, the complex is composed of two ATP-binding proteins (MetN), two transmembrane proteins (MetI) and a solute-binding protein (MetQ).

Its subcellular location is the cell inner membrane. It catalyses the reaction L-methionine(out) + ATP + H2O = L-methionine(in) + ADP + phosphate + H(+). The catalysed reaction is D-methionine(out) + ATP + H2O = D-methionine(in) + ADP + phosphate + H(+). Its function is as follows. Part of the ABC transporter complex MetNIQ involved in methionine import. Responsible for energy coupling to the transport system. This Protochlamydia amoebophila (strain UWE25) protein is Methionine import ATP-binding protein MetN.